Consider the following 825-residue polypeptide: Phenylalanine--tRNA ligase beta subunit (825 aa).

One can recognise a tRNA-binding domain in the interval 39–154 (RTWADGVVLG…EAHPLGSDVR (116 aa)). A B5 domain is found at 411–506 (PLERTLKLRL…RLYGYDRFSE (96 aa)). Mg(2+) contacts are provided by Asp484, Asp490, Glu493, and Glu494. Residues 731–824 (SPFPAADRDI…LATQFPVTLR (94 aa)) enclose the FDX-ACB domain.

Belongs to the phenylalanyl-tRNA synthetase beta subunit family. Type 1 subfamily. As to quaternary structure, tetramer of two alpha and two beta subunits. It depends on Mg(2+) as a cofactor.

The protein localises to the cytoplasm. It catalyses the reaction tRNA(Phe) + L-phenylalanine + ATP = L-phenylalanyl-tRNA(Phe) + AMP + diphosphate + H(+). This is Phenylalanine--tRNA ligase beta subunit from Synechococcus sp. (strain JA-2-3B'a(2-13)) (Cyanobacteria bacterium Yellowstone B-Prime).